Reading from the N-terminus, the 411-residue chain is Alpha-1-antiproteinase (411 aa).

An N-terminal signal peptide occupies residues 1 to 24 (MAPSISRGLLLLAALCCLAPSFLA). Ser33 carries the post-translational modification Phosphoserine. Asn64, Asn101, and Asn265 each carry an N-linked (GlcNAc...) asparagine glycan. The tract at residues 367-386 (GATVVEAVPMSLPPQVKFDH) is RCL. Ser377 is subject to Phosphoserine.

Belongs to the serpin family. Interacts with CELA2A. Interacts with ERGIC3 and LMAN1/ERGIC53. Interacts with PRSS1/Trypsin. In terms of tissue distribution, plasma.

It is found in the secreted. Inhibitor of serine proteases. The primary target is elastase, but also has a moderate affinity for plasmin and thrombin. The protein is Alpha-1-antiproteinase (Serpina1) of Rattus norvegicus (Rat).